The sequence spans 636 residues: Nuclear receptor subfamily 2 group C member 1 (636 aa).

A DNA-binding region (nuclear receptor) is located at residues 149 to 224; sequence VELCVVCGDK…LGMKQDSVQC (76 aa). 2 consecutive NR C4-type zinc fingers follow at residues 152-172 and 188-207; these read CVVC…CEGC and CRGS…CQYC. Residues 382 to 623 enclose the NR LBD domain; sequence ECVGSNSNLT…SIIPYILRME (242 aa).

Belongs to the nuclear hormone receptor family. NR2 subfamily.

It localises to the nucleus. Orphan nuclear receptor. Binds the IR7 element in the promoter of its own gene in an autoregulatory negative feedback mechanism. Primarily repressor of a broad range of genes. Binds to hormone response elements (HREs) consisting of two 5'-AGGTCA-3' half site direct repeat consensus sequences. This is Nuclear receptor subfamily 2 group C member 1 from Xenopus tropicalis (Western clawed frog).